Consider the following 842-residue polypeptide: ATP-binding cassette sub-family B member 6 (842 aa).

Residues 1–26 lie on the Lumenal side of the membrane; it reads MVTVGNYCEAEGPVGPAWMQDGLSPC. Residues 1 to 205 form a required for the lysosomal targeting region; that stretch reads MVTVGNYCEA…SGGLFVLGLW (205 aa). Residues 1–236 are required for ATPase activity; the sequence is MVTVGNYCEA…RSQVRSAAQQ (236 aa). Residue Asn-6 is glycosylated (N-linked (GlcNAc...) asparagine). An intrachain disulfide couples Cys-8 to Cys-26. The chain crosses the membrane as a helical span at residues 27–47; sequence FFFTLVPSTRMALGTLALVLA. The Cytoplasmic portion of the chain corresponds to 48 to 72; that stretch reads LPCRRRERPAGADSLSWGAGPRISP. The helical transmembrane segment at 73–93 threads the bilayer; that stretch reads YVLQLLLATLQAALPLAGLAG. The Lumenal portion of the chain corresponds to 94 to 106; sequence RVGTARGAPLPSY. Residues 107–127 traverse the membrane as a helical segment; that stretch reads LLLASVLESLAGACGLWLLVV. The Cytoplasmic segment spans residues 128–147; sequence ERSQARQRLAMGIWIKFRHS. A helical transmembrane segment spans residues 148-168; sequence PGLLLLWTVAFAAENLALVSW. Residues 169–185 are Lumenal-facing; sequence NSPQWWWARADLGQQVQ. A helical membrane pass occupies residues 186–206; the sequence is FSLWVLRYVVSGGLFVLGLWA. The Cytoplasmic portion of the chain corresponds to 207-263; it reads PGLRPQSYTLQVHEEDQDVERSQVRSAAQQSTWRDFGRKLRLLSGYLWPRGSPALQL. A helical membrane pass occupies residues 264 to 284; sequence VVLICLGLMGLERALNVLVPI. Positions 265-556 constitute an ABC transmembrane type-1 domain; it reads VLICLGLMGL…FGTYYRMIQT (292 aa). The Lumenal portion of the chain corresponds to 285-291; that stretch reads FYRNIVN. The helical transmembrane segment at 292 to 312 threads the bilayer; sequence LLTEKAPWNSLAWTVTSYVFL. Residues 313–375 are Cytoplasmic-facing; the sequence is KFLQGGGTGS…TGEVLRIADR (63 aa). The chain crosses the membrane as a helical span at residues 376–396; sequence GTSSVTGLLSYLVFNVIPTLA. Residue Asp-397 is a topological domain, lumenal. A helical membrane pass occupies residues 398–418; sequence IIIGIIYFSMFFNAWFGLIVF. At 419 to 499 the chain is on the cytoplasmic side; that stretch reads LCMSLYLTLT…SSASLVLLNQ (81 aa). A helical transmembrane segment spans residues 500–520; it reads TQNLVIGLGLLAGSLLCAYFV. Residues 521–529 are Lumenal-facing; sequence TEQKLQVGD. A helical transmembrane segment spans residues 530–550; that stretch reads YVLFGTYIIQLYMPLNWFGTY. The Cytoplasmic portion of the chain corresponds to 551 to 842; sequence YRMIQTNFID…EDTKPQTMER (292 aa). The ABC transporter domain maps to 590–824; it reads IEFENVHFSY…GGVYADMWQL (235 aa). Residues Tyr-599 and 623–634 each bind ATP; that span reads GPSGAGKSTILR.

The protein belongs to the ABC transporter superfamily. ABCB family. Heavy Metal importer (TC 3.A.1.210) subfamily. In terms of assembly, homodimer. N-glycosylated. Widely expressed. High expression is detected in the retinal epithelium. Expressed in mature erythrocytes.

Its subcellular location is the cell membrane. It is found in the mitochondrion outer membrane. The protein localises to the endoplasmic reticulum membrane. The protein resides in the golgi apparatus membrane. It localises to the endosome membrane. Its subcellular location is the lysosome membrane. It is found in the late endosome membrane. The protein localises to the early endosome membrane. The protein resides in the secreted. It localises to the extracellular exosome. Its subcellular location is the mitochondrion. It is found in the endosome. The protein localises to the multivesicular body membrane. The protein resides in the melanosome membrane. It catalyses the reaction heme b(in) + ATP + H2O = heme b(out) + ADP + phosphate + H(+). The catalysed reaction is coproporphyrin III(in) + ATP + H2O = coproporphyrin III(out) + ADP + phosphate + H(+). It carries out the reaction pheophorbide a(in) + ATP + H2O = pheophorbide a(out) + ADP + phosphate + H(+). The enzyme catalyses coproporphyrinogen III(in) + ATP + H2O = coproporphyrinogen III(out) + ADP + phosphate + H(+). It catalyses the reaction protoporphyrin IX(in) + ATP + H2O = protoporphyrin IX(out) + ADP + phosphate + H(+). The catalysed reaction is coproporphyrin I(in) + ATP + H2O = coproporphyrin I(out) + ADP + phosphate + H(+). It carries out the reaction uroporphyrin I(in) + ATP + H2O = uroporphyrin I(out) + ADP + phosphate + H(+). The enzyme catalyses uroporphyrin III(in) + ATP + H2O = uroporphyrin III(out) + ADP + phosphate + H(+). Its activity is regulated as follows. ATPase activity is inhibited by MgATP with an IC(50) of 1.03 mM and up-regulated by coporphyrin III&gt; hemin &gt; protoporphyrin IX. ATPase activity for hemin is up-regulated by glutathione. The ATPase activity is impaired by increasing copper concentrations (0-300 uM). The ATPase activity is stimulated in presence of glutathione for increasing copper concentrations (0-300 uM). Functionally, ATP-dependent transporter that catalyzes the transport of a broad-spectrum of porphyrins from the cytoplasm to the extracellular space through the plasma membrane or into the vesicle lumen. May also function as an ATP-dependent importer of porphyrins from the cytoplasm into the mitochondria, in turn may participate in the de novo heme biosynthesis regulation and in the coordination of heme and iron homeostasis during phenylhydrazine stress. May also play a key role in the early steps of melanogenesis producing PMEL amyloid fibrils. In vitro, it confers to cells a resistance to toxic metal such as arsenic and cadmium and against chemotherapeutics agent such as 5-fluorouracil, SN-38 and vincristin. In addition may play a role in the transition metal homeostasis. This Homo sapiens (Human) protein is ATP-binding cassette sub-family B member 6.